The sequence spans 385 residues: DNA double-strand break repair protein Mre11 (385 aa).

Residues aspartate 14, histidine 16, and aspartate 58 each contribute to the Mn(2+) site. Catalysis depends on histidine 94, which acts as the Proton donor. Mn(2+) is bound by residues histidine 180, histidine 216, and histidine 218.

It belongs to the MRE11/RAD32 family. In terms of assembly, homodimer. Forms a heterotetramer composed of two Mre11 subunits and two Rad50 subunits. Homodimerization facilitates DNA binding. The cofactor is Mn(2+).

Its activity is regulated as follows. Nuclease activity is regulated by Rad50. The mirin-derivative PFM39, specifically inhibits the 3'-5' exonuclease activity. The N-alkylated mirin-derivatives PFM03 and PFM01 specifically inhibit the endonuclease activity. In terms of biological role, part of the Rad50/Mre11 complex, which is involved in the early steps of DNA double-strand break (DSB) repair. The complex may facilitate opening of the processed DNA ends to aid in the recruitment of HerA and NurA. Mre11 binds to DSB ends and has both double-stranded 3'-5' exonuclease activity and single-stranded endonuclease activity. In Thermotoga maritima (strain ATCC 43589 / DSM 3109 / JCM 10099 / NBRC 100826 / MSB8), this protein is DNA double-strand break repair protein Mre11.